The sequence spans 266 residues: Gas vesicle protein L (266 aa).

Belongs to the gas vesicle GvpF/GvpL family.

The protein localises to the gas vesicle. Functionally, might be involved in nucleating gas vesicle formation. A minor component of the gas vesicle. Gas vesicles are hollow, gas filled proteinaceous nanostructures found in some microorganisms. It is not clear what function gas vesicles perform in soil bacteria. This chain is Gas vesicle protein L, found in Streptomyces sp. (strain CB03234).